The following is a 38-amino-acid chain: Large ribosomal subunit protein bL36 (38 aa).

This sequence belongs to the bacterial ribosomal protein bL36 family.

The chain is Large ribosomal subunit protein bL36 from Alcanivorax borkumensis (strain ATCC 700651 / DSM 11573 / NCIMB 13689 / SK2).